A 424-amino-acid polypeptide reads, in one-letter code: Tyrosine--tRNA ligase (424 aa).

Residue Tyr37 participates in L-tyrosine binding. A 'HIGH' region motif is present at residues 42 to 51 (PTADSLHLGH). Positions 174 and 178 each coordinate L-tyrosine. Positions 234-238 (KFGKT) match the 'KMSKS' region motif. Lys237 serves as a coordination point for ATP. Residues 357–414 (TGLIDALVASGLAKSKSEARTFIQSGSVAINGNKAEALDHAIGGDELLYGRFTILRRG) form the S4 RNA-binding domain.

This sequence belongs to the class-I aminoacyl-tRNA synthetase family. TyrS type 1 subfamily. As to quaternary structure, homodimer.

It is found in the cytoplasm. The enzyme catalyses tRNA(Tyr) + L-tyrosine + ATP = L-tyrosyl-tRNA(Tyr) + AMP + diphosphate + H(+). Catalyzes the attachment of tyrosine to tRNA(Tyr) in a two-step reaction: tyrosine is first activated by ATP to form Tyr-AMP and then transferred to the acceptor end of tRNA(Tyr). The protein is Tyrosine--tRNA ligase of Dechloromonas aromatica (strain RCB).